We begin with the raw amino-acid sequence, 135 residues long: Race-specific elicitor A4 (135 aa).

A signal peptide spans 1–18 (MHYTTLLLSTLLVGTALA). Positions 19-29 (QPTNPPAKTPK) are excised as a propeptide. The interval 19–39 (QPTNPPAKTPKKAPKTQPYNP) is disordered. In terms of domain architecture, Chitin-binding type-2 spans 47–111 (DTKCMGPKDC…DYPNLSTCPV (65 aa)). A disulfide bridge links C86 with C101. The segment at 112 to 135 (KTPQPKPKKGGVGGKKASVGHPGY) is disordered.

Functionally, this necrosis-inducing peptide induces a hypersensitive response on Cf-4 tomato genotypes. Race-specific elicitors are compounds which only induce defense responses in genotypes of host plants which are resistant to the pathogenic race that produces the elicitor, but not in susceptible genotypes. In Passalora fulva (Tomato leaf mold), this protein is Race-specific elicitor A4 (AVR4).